The following is a 396-amino-acid chain: Ribosomal RNA large subunit methyltransferase I (396 aa).

One can recognise a PUA domain in the interval 2 to 81 (SVRLVLAKGR…ESIDIAFFSR (80 aa)).

This sequence belongs to the methyltransferase superfamily. RlmI family.

It localises to the cytoplasm. The catalysed reaction is cytidine(1962) in 23S rRNA + S-adenosyl-L-methionine = 5-methylcytidine(1962) in 23S rRNA + S-adenosyl-L-homocysteine + H(+). Functionally, specifically methylates the cytosine at position 1962 (m5C1962) of 23S rRNA. This chain is Ribosomal RNA large subunit methyltransferase I, found in Shigella flexneri serotype 5b (strain 8401).